Here is a 188-residue protein sequence, read N- to C-terminus: PRA1 family protein 3 (188 aa).

The residue at position 1 (Met1) is an N-acetylmethionine. At 1–35 (MDVNIAPLRAWDDFFPGSDRFARPDFRDISKWNNR) the chain is on the cytoplasmic side. 2 helical membrane-spanning segments follow: residues 36–56 (VVSN…MMIS) and 57–77 (VVGF…VLVF). The Cytoplasmic segment spans residues 78–93 (TGFVWAAHNKDILRRM). Helical transmembrane passes span 94–114 (KKQY…FLIS) and 115–135 (LFGG…LMFI). Positions 103 to 117 (MVVMLASYFLISLFG) are required for homodimer formation and heterodimer formation with ARL6IP1. Residues 136 to 188 (HASLRLRNLKNKLENKMEEIGLKRTPMGIVLDALEQQEETITKFSDYISKMKE) lie on the Cytoplasmic side of the membrane. The segment at 136 to 188 (HASLRLRNLKNKLENKMEEIGLKRTPMGIVLDALEQQEETITKFSDYISKMKE) is targeting to endoplasmic reticulum membrane.

The protein belongs to the PRA1 family. Homodimer. Heterodimer with ARL6IP1. Forms multimers. Interacts with ARL6. Interacts with prenylated RAB1A and RAB3A. Interacts with SLC1A1/EAAC1. Interacts with RTN2 (via first transmembrane domain). Does not interact with VAMP1, VAMP2 or VAMP3.

It is found in the endoplasmic reticulum membrane. The protein resides in the cell membrane. It localises to the cytoplasm. Its subcellular location is the cytoskeleton. In terms of biological role, regulates intracellular concentrations of taurine and glutamate. Negatively modulates SLC1A1/EAAC1 glutamate transport activity by decreasing its affinity for glutamate in a PKC activity-dependent manner. Plays a role in the retention of SLC1A1/EAAC1 in the endoplasmic reticulum. In Bos taurus (Bovine), this protein is PRA1 family protein 3 (ARL6IP5).